An 893-amino-acid polypeptide reads, in one-letter code: UPF0182 protein CLM_0018 (893 aa).

7 helical membrane-spanning segments follow: residues 9–29 (IPLF…NFII), 49–69 (AIII…WMYY), 94–114 (LFFI…SSSY), 154–174 (VIIS…FILE), 202–222 (LAIV…IKIW), 246–266 (FYKI…LSIV), and 273–293 (VSVC…ASFL).

The protein belongs to the UPF0182 family.

The protein resides in the cell membrane. The protein is UPF0182 protein CLM_0018 of Clostridium botulinum (strain Kyoto / Type A2).